The primary structure comprises 81 residues: Small ribosomal subunit protein bS18A (81 aa).

It belongs to the bacterial ribosomal protein bS18 family. As to quaternary structure, part of the 30S ribosomal subunit. Forms a tight heterodimer with protein bS6.

In terms of biological role, binds as a heterodimer with protein bS6 to the central domain of the 16S rRNA, where it helps stabilize the platform of the 30S subunit. The polypeptide is Small ribosomal subunit protein bS18A (Saccharopolyspora erythraea (strain ATCC 11635 / DSM 40517 / JCM 4748 / NBRC 13426 / NCIMB 8594 / NRRL 2338)).